A 424-amino-acid chain; its full sequence is Serine--tRNA ligase (424 aa).

230–232 provides a ligand contact to L-serine; sequence TAE. 261-263 is an ATP binding site; the sequence is RSE. Glu284 lines the L-serine pocket. 348-351 contributes to the ATP binding site; the sequence is EISS. Ser384 lines the L-serine pocket.

The protein belongs to the class-II aminoacyl-tRNA synthetase family. Type-1 seryl-tRNA synthetase subfamily. Homodimer. The tRNA molecule binds across the dimer.

Its subcellular location is the cytoplasm. It catalyses the reaction tRNA(Ser) + L-serine + ATP = L-seryl-tRNA(Ser) + AMP + diphosphate + H(+). The catalysed reaction is tRNA(Sec) + L-serine + ATP = L-seryl-tRNA(Sec) + AMP + diphosphate + H(+). The protein operates within aminoacyl-tRNA biosynthesis; selenocysteinyl-tRNA(Sec) biosynthesis; L-seryl-tRNA(Sec) from L-serine and tRNA(Sec): step 1/1. Functionally, catalyzes the attachment of serine to tRNA(Ser). Is also able to aminoacylate tRNA(Sec) with serine, to form the misacylated tRNA L-seryl-tRNA(Sec), which will be further converted into selenocysteinyl-tRNA(Sec). This is Serine--tRNA ligase from Streptococcus pneumoniae serotype 4 (strain ATCC BAA-334 / TIGR4).